Consider the following 658-residue polypeptide: Exoribonuclease 2 (658 aa).

The region spanning 189–531 is the RNB domain; that stretch reads REDLTALHFI…NHRLIKAVLT (343 aa). The S1 motif domain maps to 576 to 658; the sequence is KPTFQAEIQD…ETRSIVGTLC (83 aa).

It belongs to the RNR ribonuclease family. RNase II subfamily.

It is found in the cytoplasm. It catalyses the reaction Exonucleolytic cleavage in the 3'- to 5'-direction to yield nucleoside 5'-phosphates.. In terms of biological role, involved in mRNA degradation. Hydrolyzes single-stranded polyribonucleotides processively in the 3' to 5' direction. In Pasteurella multocida (strain Pm70), this protein is Exoribonuclease 2.